The primary structure comprises 351 residues: Biotin synthase (351 aa).

A Radical SAM core domain is found at asparagine 58 to arginine 285. The [4Fe-4S] cluster site is built by cysteine 73, cysteine 77, and cysteine 80. Cysteine 117, cysteine 148, cysteine 208, and arginine 280 together coordinate [2Fe-2S] cluster.

This sequence belongs to the radical SAM superfamily. Biotin synthase family. In terms of assembly, homodimer. The cofactor is [4Fe-4S] cluster. Requires [2Fe-2S] cluster as cofactor.

It carries out the reaction (4R,5S)-dethiobiotin + (sulfur carrier)-SH + 2 reduced [2Fe-2S]-[ferredoxin] + 2 S-adenosyl-L-methionine = (sulfur carrier)-H + biotin + 2 5'-deoxyadenosine + 2 L-methionine + 2 oxidized [2Fe-2S]-[ferredoxin]. It participates in cofactor biosynthesis; biotin biosynthesis; biotin from 7,8-diaminononanoate: step 2/2. Functionally, catalyzes the conversion of dethiobiotin (DTB) to biotin by the insertion of a sulfur atom into dethiobiotin via a radical-based mechanism. The chain is Biotin synthase from Paraburkholderia phymatum (strain DSM 17167 / CIP 108236 / LMG 21445 / STM815) (Burkholderia phymatum).